A 296-amino-acid chain; its full sequence is POM121-like protein 12 (296 aa).

2 disordered regions span residues 1-54 (MGAA…SPWP) and 142-162 (APPE…RPAG). Residues 34–52 (SRSPSTPQTTPSPQGRQSP) are compositionally biased toward low complexity.

Belongs to the POM121 family.

The chain is POM121-like protein 12 (POM121L12) from Homo sapiens (Human).